The primary structure comprises 559 residues: Endoglin (559 aa).

A signal peptide spans 1 to 20 (MKSICCVLVLCLLLCRRSTA). The Extracellular segment spans residues 21–473 (SESICELKDV…SCFEFGLSAV (453 aa)). Intrachain disulfides connect cysteine 25–cysteine 201 and cysteine 47–cysteine 174. Asparagine 55, asparagine 79, asparagine 109, asparagine 133, asparagine 170, asparagine 302, and asparagine 352 each carry an N-linked (GlcNAc...) asparagine glycan. Cysteine 381 and cysteine 427 form a disulfide bridge. A helical transmembrane segment spans residues 474-494 (LGIAFGGFLIGVLLTGALWFI). Residues 495–559 (KIRTGHPVAL…TQSTPTSSMA (65 aa)) are Cytoplasmic-facing. The interval 528–559 (RQPVPTHPSPSENSSANASIGSTQSTPTSSMA) is disordered. The span at 536 to 546 (SPSENSSANAS) shows a compositional bias: low complexity. Polar residues predominate over residues 547 to 559 (IGSTQSTPTSSMA).

Homodimer; disulfide-linked.

It is found in the cell membrane. Functionally, vascular endothelium glycoprotein that plays an important role in the regulation of angiogenesis. Required for normal structure and integrity of adult vasculature. Important for endothelial cell shape changes in response to blood flow, which drive vascular remodeling and establishment of normal vascular morphology during angiogenesis. This is Endoglin from Danio rerio (Zebrafish).